The chain runs to 644 residues: Major core protein OPG129 (644 aa).

Residues 1 to 61 constitute a propeptide that is removed on maturation; it reads MEAVVNSDVF…IVDDDFISAG (61 aa).

This sequence belongs to the orthopoxvirus OPG129 family. Post-translationally, the 73-kDa precursor is cleaved to a mature protein of 60 kDa during virion maturation. Proteolytic cleavage of major core proteins OPG129, OPG136, and OPG098, which occurs at a late stage of core formation, is required for production of infectious mature virions (MV).

It localises to the virion. Its function is as follows. Major component of the virion core that undergoes proteolytic processing during the immature virion (IV) to mature virion (MV) transition. Essential for the formation of a structurally normal core. This Homo sapiens (Human) protein is Major core protein OPG129 (OPG129).